The sequence spans 92 residues: UPF0250 protein Rmag_0541 (92 aa).

The protein belongs to the UPF0250 family.

The sequence is that of UPF0250 protein Rmag_0541 from Ruthia magnifica subsp. Calyptogena magnifica.